A 206-amino-acid chain; its full sequence is Cytidylate kinase (206 aa).

9-17 (GPAAAGKGT) is a binding site for ATP.

It belongs to the cytidylate kinase family. Type 1 subfamily.

It is found in the cytoplasm. The catalysed reaction is CMP + ATP = CDP + ADP. It catalyses the reaction dCMP + ATP = dCDP + ADP. The polypeptide is Cytidylate kinase (Cereibacter sphaeroides (strain ATCC 17023 / DSM 158 / JCM 6121 / CCUG 31486 / LMG 2827 / NBRC 12203 / NCIMB 8253 / ATH 2.4.1.) (Rhodobacter sphaeroides)).